A 336-amino-acid chain; its full sequence is Glyoxylate reductase (336 aa).

NADP(+)-binding positions include 158–161, 180–182, and 239–241; these read FGRI, SRT, and IAR. Residues Arg241 and Glu270 contribute to the active site. His288 functions as the Proton donor in the catalytic mechanism. 288-290 serves as a coordination point for NADP(+); that stretch reads HIG.

This sequence belongs to the D-isomer specific 2-hydroxyacid dehydrogenase family. GyaR subfamily. In terms of assembly, homodimer.

The protein localises to the cytoplasm. The enzyme catalyses glycolate + NAD(+) = glyoxylate + NADH + H(+). This Pyrococcus furiosus (strain ATCC 43587 / DSM 3638 / JCM 8422 / Vc1) protein is Glyoxylate reductase.